Here is a 435-residue protein sequence, read N- to C-terminus: Secreted RxLR effector protein 35 (435 aa).

An N-terminal signal peptide occupies residues 1–22 (MRGAYYIIIALCVVASSQVAAG). The RxLR-dEER signature appears at 48 to 65 (RFLRGSRVVHDDLANEER). The tract at residues 336-357 (RPKRTTDGNTGTISLPTKPTKT) is disordered. A compositionally biased stretch (polar residues) spans 342–354 (DGNTGTISLPTKP).

It belongs to the RxLR effector family.

The protein localises to the secreted. Its subcellular location is the host nucleus. Its function is as follows. Secreted effector that acts as an elicitor that induces cell death in host plant cells. This is Secreted RxLR effector protein 35 from Plasmopara viticola (Downy mildew of grapevine).